Consider the following 356-residue polypeptide: Histidinol-phosphate aminotransferase (356 aa).

Lysine 214 carries the post-translational modification N6-(pyridoxal phosphate)lysine.

Belongs to the class-II pyridoxal-phosphate-dependent aminotransferase family. Histidinol-phosphate aminotransferase subfamily. Homodimer. Pyridoxal 5'-phosphate serves as cofactor.

It catalyses the reaction L-histidinol phosphate + 2-oxoglutarate = 3-(imidazol-4-yl)-2-oxopropyl phosphate + L-glutamate. It participates in amino-acid biosynthesis; L-histidine biosynthesis; L-histidine from 5-phospho-alpha-D-ribose 1-diphosphate: step 7/9. This chain is Histidinol-phosphate aminotransferase, found in Shigella flexneri serotype 5b (strain 8401).